The primary structure comprises 222 residues: MDPTDLSFSPDEINKLIETGLNTVEYFTSQQVTGTSSLGKNTIPPGVTGLLTNAAEAKIQESTNHQKGSVGGGAKPKKPRPKIAIVPADDKTVPGKPIPNPLLGLDSTPSTQTVLDLSGKTLPSGSYKGVKLAKFGKENLMTRFIEEPRENPIATSSPIDFKRGRDTGGFHRREYSIGWVGDEVKVTEWCNPSCSPITAAARRFECTCHQCPVTCSECERDT.

Residues 61 to 107 form a disordered region; it reads ESTNHQKGSVGGGAKPKKPRPKIAIVPADDKTVPGKPIPNPLLGLDS. Residues histidine 171, cysteine 190, cysteine 194, cysteine 206, cysteine 208, cysteine 211, cysteine 215, and cysteine 218 each coordinate Zn(2+).

It belongs to the paramyxoviruses V protein family. Interacts with host DDB1, STAT2 and IFIH1/MDA5. Interacts with host RIGI regulatory protein (via CARDs domain) and host TRIM25 (via SPRY domain); these interactions prevent TRIM25-mediated ubiquitination of RIG-I and disrupts downstream RIG-I signaling.

Its subcellular location is the host cytoplasm. In terms of biological role, plays an essential role in the inhibition of host immune response. Prevents the establishment of cellular antiviral state by blocking interferon-alpha/beta (IFN-alpha/beta) production and signaling pathway. Interacts with host IFIH1/MDA5 and DHX58/LGP2 to inhibit the transduction pathway involved in the activation of IFN-beta promoter, thus protecting the virus against cell antiviral state. Efficiently blocks type I IFN signaling following infection by behaving as a substrate receptor for CUL4-DDB1 E3 ligase complex and targeting host STAT1 for proteasomal degradation. Blocks the type I interferon signaling pathway by disrupting the RIG-I signaling pathway. In Parainfluenza virus 5 (strain W3) (PIV5), this protein is Non-structural protein V (P/V).